Reading from the N-terminus, the 400-residue chain is Argininosuccinate synthase (400 aa).

Position 8–16 (8–16 (AYSGGLDTS)) interacts with ATP. Y87 is a binding site for L-citrulline. G117 lines the ATP pocket. Positions 119, 123, and 124 each coordinate L-aspartate. An L-citrulline-binding site is contributed by N123. L-citrulline-binding residues include R127, S175, E260, and Y272.

It belongs to the argininosuccinate synthase family. Type 1 subfamily. In terms of assembly, homotetramer.

The protein localises to the cytoplasm. It carries out the reaction L-citrulline + L-aspartate + ATP = 2-(N(omega)-L-arginino)succinate + AMP + diphosphate + H(+). It functions in the pathway amino-acid biosynthesis; L-arginine biosynthesis; L-arginine from L-ornithine and carbamoyl phosphate: step 2/3. The sequence is that of Argininosuccinate synthase from Mycobacterium sp. (strain KMS).